Consider the following 415-residue polypeptide: Plant UBX domain-containing protein 16 (415 aa).

In terms of domain architecture, UBA spans 19 to 69; that stretch reads QLDEEIVLFRQDQLISSFLEIAVDQTAETARILLQTTDWNIDQAVNLFLTN. In terms of domain architecture, UBX spans 333 to 413; that stretch reads DRSVVCSLCV…GLANSLISVT (81 aa).

The protein is Plant UBX domain-containing protein 16 of Arabidopsis thaliana (Mouse-ear cress).